We begin with the raw amino-acid sequence, 436 residues long: Homeobox protein PKNOX1 (436 aa).

The interval Glu23–Pro50 is disordered. Ser33 and Ser41 each carry phosphoserine. The MEIS N-terminal domain maps to Gly80–Glu163. Positions Ser259–Met321 form a DNA-binding region, homeobox; TALE-type. The interval Ala401–Gln436 is disordered. Acidic residues predominate over residues Ser404–Gly416.

This sequence belongs to the TALE/MEIS homeobox family. Interacts with MN1.

Its subcellular location is the nucleus. Its function is as follows. Activates transcription in the presence of PBX1A and HOXA1. (Microbial infection) In complex with PBX1, binds to the 5'-TGATTGAC-3' consensus sequence in the U5 region of Moloney murine leukemia virus and promotes viral transcription. The polypeptide is Homeobox protein PKNOX1 (Mus musculus (Mouse)).